The chain runs to 324 residues: dITP/XTP pyrophosphatase (324 aa).

The tract at residues 1–126 (MTKSIFEYKD…SDNKSDFGDV (126 aa)) is unknown. The interval 127–324 (LLIATRNEGK…EVFPAWQNKQ (198 aa)) is NTP pyrophosphatase. 131 to 136 (TRNEGK) lines the substrate pocket. Aspartate 193 (proton acceptor) is an active-site residue. Residue aspartate 193 participates in Mg(2+) binding. Substrate contacts are provided by residues serine 194, 277 to 280 (FGYD), lysine 300, and 305 to 306 (HR).

This sequence belongs to the HAM1 NTPase family. Homodimer. Requires Mg(2+) as cofactor.

It carries out the reaction XTP + H2O = XMP + diphosphate + H(+). The catalysed reaction is dITP + H2O = dIMP + diphosphate + H(+). It catalyses the reaction ITP + H2O = IMP + diphosphate + H(+). Its function is as follows. Pyrophosphatase that catalyzes the hydrolysis of nucleoside triphosphates to their monophosphate derivatives, with a high preference for the non-canonical purine nucleotides XTP (xanthosine triphosphate), dITP (deoxyinosine triphosphate) and ITP. Seems to function as a house-cleaning enzyme that removes non-canonical purine nucleotides from the nucleotide pool, thus preventing their incorporation into DNA/RNA and avoiding chromosomal lesions. This Streptococcus thermophilus (strain CNRZ 1066) protein is dITP/XTP pyrophosphatase.